A 327-amino-acid chain; its full sequence is MKEIKLNSDSLEIYEKSVSEKLNRNDFIKLWDLDLNDLLDISYNLKKLFNKEKIDLCSIMNAKSGICPENCIFCSQSKHNTSKIDTYGLKSKEEILKNAKSVEKYSNRFSIVVSGKTVTDLEFEKIIESIEEIQNKTKLRVCVSLGLLNKDKLKALKERNVRIHNNLETSENYFKNICTSHDYSEKIKVILEAKKIGLEMCSGGIFGMGETIEDRVDLFLDLKKLGVDSVALNLLNPIYGTKIYEKIKSGDISPINSTDALKSICIARIALPNKVIRLCGGREHVLKDMQKYSLLALDGLMIGNYLTTNGQNIQSDLKMIEEMGFER.

The Radical SAM core domain occupies 49 to 282; sequence FNKEKIDLCS…NKVIRLCGGR (234 aa). Cysteine 67, cysteine 71, and cysteine 74 together coordinate [4Fe-4S] cluster. 4 residues coordinate [2Fe-2S] cluster: serine 110, cysteine 142, cysteine 201, and arginine 277.

It belongs to the radical SAM superfamily. Biotin synthase family. In terms of assembly, homodimer. [4Fe-4S] cluster serves as cofactor. The cofactor is [2Fe-2S] cluster.

It carries out the reaction (4R,5S)-dethiobiotin + (sulfur carrier)-SH + 2 reduced [2Fe-2S]-[ferredoxin] + 2 S-adenosyl-L-methionine = (sulfur carrier)-H + biotin + 2 5'-deoxyadenosine + 2 L-methionine + 2 oxidized [2Fe-2S]-[ferredoxin]. It functions in the pathway cofactor biosynthesis; biotin biosynthesis; biotin from 7,8-diaminononanoate: step 2/2. Catalyzes the conversion of dethiobiotin (DTB) to biotin by the insertion of a sulfur atom into dethiobiotin via a radical-based mechanism. The sequence is that of Biotin synthase from Methanococcus maripaludis (strain DSM 14266 / JCM 13030 / NBRC 101832 / S2 / LL).